The following is a 326-amino-acid chain: Putative replication protein B (326 aa).

This sequence belongs to the ParB family.

The protein is Putative replication protein B of Sinorhizobium fredii (strain NBRC 101917 / NGR234).